Reading from the N-terminus, the 256-residue chain is Hemolymph lipopolysaccharide-binding protein (256 aa).

A signal peptide spans 1–21; that stretch reads MMNTRALLPLSVLLMATLCLC. The propeptide occupies 22 to 33; that stretch reads ELPIPILQRFVR. Residue asparagine 56 is glycosylated (N-linked (GlcNAc...) asparagine). Positions 146–256 constitute a C-type lectin domain; sequence IICQQEGGHL…KLPFVCEVEL (111 aa). 2 disulfide bridges follow: cysteine 148–cysteine 252 and cysteine 230–cysteine 244.

In terms of tissue distribution, hemolymph.

The protein localises to the secreted. Participates probably in the elimination of foreign substances invading the insect abdominal cavity, and in trapping intracellular symbionts, when they leak from the mycetomes into the hemolymph. This chain is Hemolymph lipopolysaccharide-binding protein, found in Periplaneta americana (American cockroach).